Consider the following 415-residue polypeptide: MKGSYKSRWVIVIVVVIAAIAAFWFWQGRNDSQSAAPGATKQAQQSPAGGRRGMRSGPLAPVQAATAVEQAVPRYLTGLGTITAANTVTVRSRVDGQLMALHFQEGQQVKAGDLLAEIDPSQFKVALAQAQGQLAKDKATLANARRDLARYQQLAKTNLVSRQELDAQQALVSETEGTIKADEASVASAQLQLDWSRITAPVDGRVGLKQVDVGNQISSGDTTGIVVITQTHPIDLVFTLPESDIATVVQAQKAGKPLVVEAWDRTNSKKLSEGTLLSLDNQIDATTGTIKVKARFNNQDDALFPNQFVNARMLVDTEQNAVVIPTAALQMGNEGHFVWVLNSENKVSKHLVTPGIQDSQKVVIRAGISAGDRVVTDGIDRLTEGAKVEVVEAQSATTPEEKATSREYAKKGARS.

A signal peptide spans 1-21; it reads MKGSYKSRWVIVIVVVIAAIA. Positions 31 to 47 are enriched in polar residues; sequence DSQSAAPGATKQAQQSP. 2 disordered regions span residues 31–60 and 392–415; these read DSQSAAPGATKQAQQSPAGGRRGMRSGPLA and EAQSATTPEEKATSREYAKKGARS. Residues 399-415 show a composition bias toward basic and acidic residues; it reads PEEKATSREYAKKGARS.

The protein belongs to the membrane fusion protein (MFP) (TC 8.A.1) family. In terms of assembly, part of a tripartite efflux system composed of MdtA, MdtB and MdtC.

It is found in the cell inner membrane. Its function is as follows. The MdtABC tripartite complex confers resistance against novobiocin and deoxycholate. This is Multidrug resistance protein MdtA from Escherichia coli O8 (strain IAI1).